The chain runs to 355 residues: Nematocyst expressed protein 3 (355 aa).

Positions Met-1–Ala-18 are cleaved as a signal peptide. ShKT domains are found at residues Cys-50–Cys-89, Gln-107–Cys-134, and Ser-140–Tyr-182. Intrachain disulfides connect Cys-50-Cys-89, Cys-57-Cys-82, Cys-71-Cys-86, Cys-116-Cys-131, Cys-149-Cys-175, and Cys-158-Cys-179. A propeptide spanning residues Lys-92–His-355 is cleaved from the precursor. A disordered region spans residues Tyr-202–His-355. Residues Met-207–Pro-221 show a composition bias toward pro residues. Low complexity-rich tracts occupy residues Tyr-222–Gln-232, Val-240–Glu-270, and Thr-277–Asp-332. The segment covering Asn-335–His-355 has biased composition (basic residues).

This sequence belongs to the NEP3 family. As to expression, nematocytes. In late planulae, transcripts are found throughout the ectoderm in nematocytes, with high concentration of expressing cells in the oral pole. In primary polyps, is expressed in nematocytes in the body wall and physa ectoderm and in the upper and lower pharynx.

Its subcellular location is the nematocyst. The protein resides in the secreted. Its function is as follows. Neurotoxin. In vivo, induces pronounced contraction and tail twitching on zebrafish larvae, as well as death 5 hours later. This is Nematocyst expressed protein 3 from Nematostella vectensis (Starlet sea anemone).